A 501-amino-acid chain; its full sequence is Glutamate--tRNA ligase (501 aa).

Residues 11 to 21 carry the 'HIGH' region motif; the sequence is PSPTGPLHIGG. Residues 260 to 264 carry the 'KMSKS' region motif; the sequence is KLSKR. Residue Lys-263 participates in ATP binding.

This sequence belongs to the class-I aminoacyl-tRNA synthetase family. Glutamate--tRNA ligase type 1 subfamily. Monomer.

The protein resides in the cytoplasm. The catalysed reaction is tRNA(Glu) + L-glutamate + ATP = L-glutamyl-tRNA(Glu) + AMP + diphosphate. Its function is as follows. Catalyzes the attachment of glutamate to tRNA(Glu) in a two-step reaction: glutamate is first activated by ATP to form Glu-AMP and then transferred to the acceptor end of tRNA(Glu). The polypeptide is Glutamate--tRNA ligase (Flavobacterium johnsoniae (strain ATCC 17061 / DSM 2064 / JCM 8514 / BCRC 14874 / CCUG 350202 / NBRC 14942 / NCIMB 11054 / UW101) (Cytophaga johnsonae)).